The sequence spans 129 residues: Small ribosomal subunit protein uS11 (129 aa).

It belongs to the universal ribosomal protein uS11 family. As to quaternary structure, part of the 30S ribosomal subunit. Interacts with proteins S7 and S18. Binds to IF-3.

Located on the platform of the 30S subunit, it bridges several disparate RNA helices of the 16S rRNA. Forms part of the Shine-Dalgarno cleft in the 70S ribosome. This is Small ribosomal subunit protein uS11 from Agrobacterium fabrum (strain C58 / ATCC 33970) (Agrobacterium tumefaciens (strain C58)).